Here is a 101-residue protein sequence, read N- to C-terminus: Small ribosomal subunit protein uS14 (101 aa).

This sequence belongs to the universal ribosomal protein uS14 family. In terms of assembly, part of the 30S ribosomal subunit. Contacts proteins S3 and S10.

In terms of biological role, binds 16S rRNA, required for the assembly of 30S particles and may also be responsible for determining the conformation of the 16S rRNA at the A site. The sequence is that of Small ribosomal subunit protein uS14 from Burkholderia ambifaria (strain MC40-6).